We begin with the raw amino-acid sequence, 81 residues long: Photosystem I iron-sulfur center (81 aa).

4Fe-4S ferredoxin-type domains lie at 2–31 (SHSV…MVPW) and 37–68 (GQIA…VRVY). Residues cysteine 11, cysteine 14, cysteine 17, cysteine 21, cysteine 48, cysteine 51, cysteine 54, and cysteine 58 each contribute to the [4Fe-4S] cluster site.

In terms of assembly, the cyanobacterial PSI reaction center is composed of one copy each of PsaA,B,C,D,E,F,I,J,K,L,M and X, and forms trimeric complexes. It depends on [4Fe-4S] cluster as a cofactor.

The protein resides in the cellular thylakoid membrane. It carries out the reaction reduced [plastocyanin] + hnu + oxidized [2Fe-2S]-[ferredoxin] = oxidized [plastocyanin] + reduced [2Fe-2S]-[ferredoxin]. Its function is as follows. Apoprotein for the two 4Fe-4S centers FA and FB of photosystem I (PSI); essential for photochemical activity. FB is the terminal electron acceptor of PSI, donating electrons to ferredoxin. The C-terminus interacts with PsaA/B/D and helps assemble the protein into the PSI complex. Required for binding of PsaD and PsaE to PSI. PSI is a plastocyanin/cytochrome c6-ferredoxin oxidoreductase, converting photonic excitation into a charge separation, which transfers an electron from the donor P700 chlorophyll pair to the spectroscopically characterized acceptors A0, A1, FX, FA and FB in turn. In Trichodesmium erythraeum (strain IMS101), this protein is Photosystem I iron-sulfur center.